A 245-amino-acid chain; its full sequence is 1-(5-phosphoribosyl)-5-[(5-phosphoribosylamino)methylideneamino] imidazole-4-carboxamide isomerase (245 aa).

D7 serves as the catalytic Proton acceptor. D129 acts as the Proton donor in catalysis.

Belongs to the HisA/HisF family.

The protein resides in the cytoplasm. The catalysed reaction is 1-(5-phospho-beta-D-ribosyl)-5-[(5-phospho-beta-D-ribosylamino)methylideneamino]imidazole-4-carboxamide = 5-[(5-phospho-1-deoxy-D-ribulos-1-ylimino)methylamino]-1-(5-phospho-beta-D-ribosyl)imidazole-4-carboxamide. It functions in the pathway amino-acid biosynthesis; L-histidine biosynthesis; L-histidine from 5-phospho-alpha-D-ribose 1-diphosphate: step 4/9. The sequence is that of 1-(5-phosphoribosyl)-5-[(5-phosphoribosylamino)methylideneamino] imidazole-4-carboxamide isomerase from Edwardsiella ictaluri (strain 93-146).